We begin with the raw amino-acid sequence, 79 residues long: CDC42 small effector protein 1-A (79 aa).

S-palmitoyl cysteine attachment occurs at residues cysteine 10 and cysteine 11. Positions 30 to 43 constitute a CRIB domain; the sequence is IGEPMNFVHLTHVG.

This sequence belongs to the CDC42SE/SPEC family.

Its subcellular location is the cytoplasm. The protein localises to the cytoskeleton. It localises to the cell membrane. Probably involved in the organization of the actin cytoskeleton by acting downstream of CDC42, inducing actin filament assembly. The sequence is that of CDC42 small effector protein 1-A (cdc42se1-a) from Xenopus laevis (African clawed frog).